The primary structure comprises 2601 residues: Centrosomal protein of 295 kDa (2601 aa).

A necessary for centriole targeting and microtubule association region spans residues 1–560 (MKRKVVNTHK…KKTQPTGVGI (560 aa)). Ser14 carries the phosphoserine modification. Coiled-coil stretches lie at residues 207–273 (KRPD…EDLA) and 500–552 (AARI…KRKK). 2 positions are modified to phosphoserine: Ser654 and Ser938. The interval 1008–1029 (PSADTKSGKIQEQHSSKSEKGL) is disordered. Residues 1013–1027 (KSGKIQEQHSSKSEK) are compositionally biased toward basic and acidic residues. 2 coiled-coil regions span residues 1053 to 1082 (LHDS…VELL) and 1498 to 1544 (IQSH…VSSE). The segment at 1558–1580 (ADSERTQKSFPTKSNDTLPSSHR) is disordered. The segment covering 1565-1577 (KSFPTKSNDTLPS) has biased composition (polar residues). Ser1637 is modified (phosphoserine). The stretch at 1728–1758 (QEKLLVQRQTALQQQIQKHEETLKDFFKDSQ) forms a coiled coil. Basic and acidic residues-rich tracts occupy residues 1795–1827 (RHAD…DLGR), 1985–2003 (FSEH…KEEE), and 2100–2112 (DNRD…DSSS). 3 disordered regions span residues 1795-1834 (RHAD…KPPV), 1979-2004 (LTDP…EEET), and 2085-2117 (HPDF…SHCA). Thr2473 is subject to Phosphothreonine. An ALMS motif region spans residues 2478 to 2601 (SLQEAFIKRK…LEKLRAKNTC (124 aa)). Residues 2556–2581 (RLYNQLAEVKQQKEEKTKQEAYAQNR) are a coiled coil.

In terms of assembly, interacts (via ALMS motif) with microtubules; this interaction is direct.

The protein localises to the cytoplasm. The protein resides in the cytoskeleton. It is found in the microtubule organizing center. Its subcellular location is the centrosome. It localises to the centriole. The protein localises to the spindle. In terms of biological role, centriole-enriched microtubule-binding protein involved in centriole biogenesis. Essential for the generation of the distal portion of new-born centrioles in a CPAP- and CEP120-mediated elongation dependent manner during the cell cycle S/G2 phase after formation of the initiating cartwheel structure. Required for the recruitment of centriolar proteins, such as POC1B, POC5 and CEP135, into the distal portion of centrioles. Also required for centriole-to-centrosome conversion during mitotic progression, but is dispensable for cartwheel removal or centriole disengagement. Binds to and stabilizes centriolar microtubule. May be involved in ciliogenesis. The protein is Centrosomal protein of 295 kDa of Homo sapiens (Human).